We begin with the raw amino-acid sequence, 428 residues long: Delta-aminolevulinic acid dehydratase, chloroplastic (428 aa).

Lys-294 serves as the catalytic Schiff-base intermediate with substrate. 5-aminolevulinate-binding residues include Arg-304 and Lys-316. Glu-332 provides a ligand contact to Mg(2+). Catalysis depends on Lys-347, which acts as the Schiff-base intermediate with substrate. 5-aminolevulinate contacts are provided by Ser-373 and Tyr-412.

This sequence belongs to the ALAD family. In terms of assembly, homooctamer. The cofactor is Mg(2+).

It localises to the plastid. It is found in the chloroplast. It carries out the reaction 2 5-aminolevulinate = porphobilinogen + 2 H2O + H(+). It functions in the pathway porphyrin-containing compound metabolism; protoporphyrin-IX biosynthesis; coproporphyrinogen-III from 5-aminolevulinate: step 1/4. Functionally, catalyzes an early step in the biosynthesis of tetrapyrroles. Binds two molecules of 5-aminolevulinate per subunit, each at a distinct site, and catalyzes their condensation to form porphobilinogen. This chain is Delta-aminolevulinic acid dehydratase, chloroplastic (HEMB), found in Hordeum vulgare (Barley).